The chain runs to 418 residues: Serine hydroxymethyltransferase (418 aa).

(6S)-5,6,7,8-tetrahydrofolate-binding positions include Leu121 and Gly125–Leu127. Position 230 is an N6-(pyridoxal phosphate)lysine (Lys230). (6S)-5,6,7,8-tetrahydrofolate contacts are provided by residues Glu246 and Ser355–Phe357.

This sequence belongs to the SHMT family. Homodimer. It depends on pyridoxal 5'-phosphate as a cofactor.

It is found in the cytoplasm. It catalyses the reaction (6R)-5,10-methylene-5,6,7,8-tetrahydrofolate + glycine + H2O = (6S)-5,6,7,8-tetrahydrofolate + L-serine. Its pathway is one-carbon metabolism; tetrahydrofolate interconversion. The protein operates within amino-acid biosynthesis; glycine biosynthesis; glycine from L-serine: step 1/1. Functionally, catalyzes the reversible interconversion of serine and glycine with tetrahydrofolate (THF) serving as the one-carbon carrier. This reaction serves as the major source of one-carbon groups required for the biosynthesis of purines, thymidylate, methionine, and other important biomolecules. Also exhibits THF-independent aldolase activity toward beta-hydroxyamino acids, producing glycine and aldehydes, via a retro-aldol mechanism. The polypeptide is Serine hydroxymethyltransferase (Streptococcus pneumoniae (strain ATCC 700669 / Spain 23F-1)).